We begin with the raw amino-acid sequence, 414 residues long: Isocitrate dehydrogenase [NADP] cytoplasmic (414 aa).

Ser2 carries the N-acetylserine modification. At Tyr42 the chain carries Phosphotyrosine. Position 75–77 (75–77 (TIT)) interacts with NADP(+). Thr77 contributes to the substrate binding site. Lys81 is modified (N6-acetyllysine). An NADP(+)-binding site is contributed by Arg82. Substrate is bound by residues 94–100 (SPNGTIR) and Arg109. Lys126 bears the N6-succinyllysine mark. Substrate-binding residues include Arg132 and Lys212. N6-acetyllysine occurs at positions 224 and 233. Mn(2+) is bound at residue Asp252. Residue Lys260 participates in NADP(+) binding. Mn(2+)-binding residues include Asp275 and Asp279. Residue 310–315 (GTVTRH) coordinates NADP(+). Position 321 is an N6-acetyllysine (Lys321). Asn328 contacts NADP(+). A Phosphoserine modification is found at Ser389. Lys400 carries the N6-succinyllysine modification.

The protein belongs to the isocitrate and isopropylmalate dehydrogenases family. Homodimer. Requires Mg(2+) as cofactor. The cofactor is Mn(2+). Acetylation at Lys-374 dramatically reduces catalytic activity. Expressed preferentially in corneal epithelium. Constitute approximately 13% of the total soluble bovine corneal epithelial proteins.

It is found in the cytoplasm. The protein localises to the cytosol. It carries out the reaction D-threo-isocitrate + NADP(+) = 2-oxoglutarate + CO2 + NADPH. Its function is as follows. Catalyzes the NADP(+)-dependent oxidative decarboxylation of isocitrate (D-threo-isocitrate) to 2-ketoglutarate (2-oxoglutarate), which is required by other enzymes such as the phytanoyl-CoA dioxygenase. Plays a critical role in the generation of NADPH, an important cofactor in many biosynthesis pathways. May act as a corneal epithelial crystallin and may be involved in maintaining corneal epithelial transparency. This Bos taurus (Bovine) protein is Isocitrate dehydrogenase [NADP] cytoplasmic (IDH1).